A 287-amino-acid chain; its full sequence is Orotidine 5'-phosphate decarboxylase (287 aa).

Lys-97 acts as the Proton donor in catalysis.

Belongs to the OMP decarboxylase family. Type 2 subfamily.

It carries out the reaction orotidine 5'-phosphate + H(+) = UMP + CO2. Its pathway is pyrimidine metabolism; UMP biosynthesis via de novo pathway; UMP from orotate: step 2/2. This is Orotidine 5'-phosphate decarboxylase (pyrF) from Clostridium perfringens (strain 13 / Type A).